A 93-amino-acid polypeptide reads, in one-letter code: Putative septation protein SpoVG (93 aa).

It belongs to the SpoVG family.

In terms of biological role, could be involved in septation. The sequence is that of Putative septation protein SpoVG from Fusobacterium nucleatum subsp. nucleatum (strain ATCC 25586 / DSM 15643 / BCRC 10681 / CIP 101130 / JCM 8532 / KCTC 2640 / LMG 13131 / VPI 4355).